We begin with the raw amino-acid sequence, 435 residues long: 5-hydroxybenzimidazole synthase (435 aa).

Residues Met95, Tyr124, His163, Ser186–Gly188, Asn227–Arg230, and Glu266 contribute to the substrate site. His270 provides a ligand contact to Zn(2+). Tyr293 contacts substrate. Zn(2+) is bound at residue His334. 3 residues coordinate [4Fe-4S] cluster: Cys410, Cys413, and Cys417.

This sequence belongs to the ThiC family. 5-hydroxybenzimidazole synthase subfamily. Homodimer. [4Fe-4S] cluster serves as cofactor.

The enzyme catalyses 5-amino-1-(5-phospho-beta-D-ribosyl)imidazole + AH2 + S-adenosyl-L-methionine = 5-hydroxybenzimidazole + 5'-deoxyadenosine + formate + L-methionine + A + NH4(+) + phosphate + 2 H(+). Its function is as follows. Catalyzes the conversion of aminoimidazole ribotide (AIR) to 5-hydroxybenzimidazole (5-HBI) in a radical S-adenosyl-L-methionine (SAM)-dependent reaction. Is thus involved in the anaerobic biosynthesis of the benzimidazole lower axial ligand of the cobamide produced by G.metallireducens. This chain is 5-hydroxybenzimidazole synthase, found in Geobacter metallireducens (strain ATCC 53774 / DSM 7210 / GS-15).